The chain runs to 81 residues: Putative membrane protein insertion efficiency factor (81 aa).

The protein belongs to the UPF0161 family.

Its subcellular location is the cell inner membrane. Functionally, could be involved in insertion of integral membrane proteins into the membrane. The sequence is that of Putative membrane protein insertion efficiency factor from Thermosipho melanesiensis (strain DSM 12029 / CIP 104789 / BI429).